Reading from the N-terminus, the 253-residue chain is Alpha-acetolactate decarboxylase (253 aa).

This sequence belongs to the alpha-acetolactate decarboxylase family.

The catalysed reaction is (2S)-2-acetolactate + H(+) = (R)-acetoin + CO2. It functions in the pathway polyol metabolism; (R,R)-butane-2,3-diol biosynthesis; (R,R)-butane-2,3-diol from pyruvate: step 2/3. Its function is as follows. Converts acetolactate into acetoin. The protein is Alpha-acetolactate decarboxylase (alsD) of Bacillus licheniformis (strain ATCC 14580 / DSM 13 / JCM 2505 / CCUG 7422 / NBRC 12200 / NCIMB 9375 / NCTC 10341 / NRRL NRS-1264 / Gibson 46).